The sequence spans 318 residues: Methionyl-tRNA formyltransferase (318 aa).

112 to 115 (SLLP) contacts (6S)-5,6,7,8-tetrahydrofolate.

This sequence belongs to the Fmt family.

The enzyme catalyses L-methionyl-tRNA(fMet) + (6R)-10-formyltetrahydrofolate = N-formyl-L-methionyl-tRNA(fMet) + (6S)-5,6,7,8-tetrahydrofolate + H(+). Attaches a formyl group to the free amino group of methionyl-tRNA(fMet). The formyl group appears to play a dual role in the initiator identity of N-formylmethionyl-tRNA by promoting its recognition by IF2 and preventing the misappropriation of this tRNA by the elongation apparatus. The polypeptide is Methionyl-tRNA formyltransferase (Mycobacterium leprae (strain Br4923)).